The primary structure comprises 303 residues: Cyclin-dependent kinase 4 (303 aa).

Residue Ala-2 is modified to N-acetylalanine. In terms of domain architecture, Protein kinase spans 6–295 (YEPVAEIGVG…AFRALQHSYL (290 aa)). ATP contacts are provided by residues 12 to 20 (IGVGAYGTV) and Lys-35. The required for binding D-type cyclins stretch occupies residues 50 to 56 (PVSTVRE). Residue Asp-140 is the Proton acceptor of the active site. Thr-172 is modified (phosphothreonine; by CAK). A Phosphoserine modification is found at Ser-300.

Belongs to the protein kinase superfamily. CMGC Ser/Thr protein kinase family. CDC2/CDKX subfamily. Component of the D-CDK4 complex, composed of CDK4 and some D-type G1 cyclin (CCND1, CCND2 or CCND3). Interacts directly in the complex with CCND1, CCND2 or CCND3. Interacts with ZNF655. Forms a ternary complex, cyclin D-CDK4-CDKN1B, involved in modulating CDK4 enzymatic activity. Interacts directly with CDKN1B (phosphorylated on 'Tyr-88' and 'Tyr-89'); the interaction allows assembly of the cyclin D-CDK4 complex, Thr-172 phosphorylation, nuclear translocation and enhances the cyclin D-CDK4 complex activity. CDK4 activity is either inhibited or enhanced depending on stoichiometry of complex. The non-tyrosine-phosphorylated form of CDKN1B prevents T-loop phosphorylation of CDK4 producing inactive CDK4. Interacts (unphosphorylated form) with CDK2. Also forms ternary complexes with CDKN1A or CDKN2A. Interacts directly with CDKN1A (via its N-terminal); the interaction promotes the assembly of the cyclin D-CDK4 complex, its nuclear translocation and promotes the cyclin D-dependent enzyme activity of CDK4. Interacts with CCND1; the interaction is prevented with the binding of CCND1 to INSM1 during cell cycle progression. Interacts with SEI1 and CCND1. Probably forms a complex composed of chaperones HSP90 and HSP70, co-chaperones CDC37, PPP5C, TSC1 and client protein TSC2, CDK4, AKT, RAF1 and NR3C1; this complex does not contain co-chaperones STIP1/HOP and PTGES3/p23. Interacts with CEBPA (when phosphorylated). Interacts with FNIP1 and FNIP2. Post-translationally, phosphorylation at Thr-172 is required for enzymatic activity. Phosphorylated, in vitro, at this site by CCNH-CDK7, but, in vivo, appears to be phosphorylated by a proline-directed kinase. In the cyclin D-CDK4-CDKN1B complex, this phosphorylation and consequent CDK4 enzyme activity, is dependent on the tyrosine phosphorylation state of CDKN1B. Thus, in proliferating cells, CDK4 within the complex is phosphorylated on Thr-172 in the T-loop. In resting cells, phosphorylation on Thr-172 is prevented by the non-tyrosine-phosphorylated form of CDKN1B.

It localises to the cytoplasm. The protein resides in the nucleus. It is found in the nucleus membrane. It carries out the reaction L-seryl-[protein] + ATP = O-phospho-L-seryl-[protein] + ADP + H(+). It catalyses the reaction L-threonyl-[protein] + ATP = O-phospho-L-threonyl-[protein] + ADP + H(+). Its activity is regulated as follows. Both phosphorylation at Thr-172 and binding of a D-type cyclin are necessary for enzymatic activity. Full activation of the cyclin-D-CDK4 complex appears to require other factors such as recruitment of the substrate via a substrate recruitment motif, and/or formation of the CDKN1B ternary complex. Inhibited by INK4 family members. In resting cells, the non-tyrosine-phosphorylated form of CDKN1B prevents phosphorylation at Thr-172 and inactivation, while, in proliferating cells, tyrosine phosphorylation of CDKN1B allows phosphorylation of Thr-172 of CDK4 and subsequent activation. Functionally, ser/Thr-kinase component of cyclin D-CDK4 (DC) complexes that phosphorylate and inhibit members of the retinoblastoma (RB) protein family including RB1 and regulate the cell-cycle during G(1)/S transition. Phosphorylation of RB1 allows dissociation of the transcription factor E2F from the RB/E2F complexes and the subsequent transcription of E2F target genes which are responsible for the progression through the G(1) phase. Hypophosphorylates RB1 in early G(1) phase. Cyclin D-CDK4 complexes are major integrators of various mitogenenic and antimitogenic signals. Also phosphorylates SMAD3 in a cell-cycle-dependent manner and represses its transcriptional activity. Component of the ternary complex, cyclin D/CDK4/CDKN1B, required for nuclear translocation and activity of the cyclin D-CDK4 complex. The protein is Cyclin-dependent kinase 4 (Cdk4) of Mus musculus (Mouse).